A 99-amino-acid chain; its full sequence is Transmembrane protein 14A (99 aa).

3 helical membrane passes run 1 to 21 (MDLI…FGYK), 24 to 44 (GGVP…YGAY), and 79 to 99 (PAGL…LLLL).

Belongs to the TMEM14 family. As to expression, expressed at significantly higher levels in ovarian cancer tissues than in normal tissues (at protein level).

It localises to the mitochondrion membrane. It is found in the endoplasmic reticulum membrane. Inhibits apoptosis via negative regulation of the mitochondrial outer membrane permeabilization involved in apoptotic signaling pathway. The chain is Transmembrane protein 14A (TMEM14A) from Homo sapiens (Human).